The sequence spans 436 residues: RNA-binding motif, single-stranded-interacting protein 3 (436 aa).

The interval 28–56 (APAPHPMAPPSPSTNSSSNNSSNNSSGEQ) is disordered. A compositionally biased stretch (pro residues) spans 30–39 (APHPMAPPSP). Over residues 40–53 (STNSSSNNSSNNSS) the composition is skewed to low complexity. RRM domains lie at 60–133 (TNLY…MAKQ) and 139–224 (TNLY…FADG). A compositionally biased stretch (polar residues) spans 398-421 (TSPQTVAPSSQDTSGQQQQIAVDT). Residues 398–436 (TSPQTVAPSSQDTSGQQQQIAVDTSNEHAPAYSYQQSKP) form a disordered region.

The protein resides in the cytoplasm. Its function is as follows. Binds poly(A) and poly(U) oligoribonucleotides. The chain is RNA-binding motif, single-stranded-interacting protein 3 (RBMS3) from Pongo abelii (Sumatran orangutan).